The following is a 513-amino-acid chain: ATP synthase subunit alpha (513 aa).

Position 169 to 176 (169 to 176) interacts with ATP; that stretch reads GDRQTGKT.

The protein belongs to the ATPase alpha/beta chains family. In terms of assembly, F-type ATPases have 2 components, CF(1) - the catalytic core - and CF(0) - the membrane proton channel. CF(1) has five subunits: alpha(3), beta(3), gamma(1), delta(1), epsilon(1). CF(0) has three main subunits: a(1), b(2) and c(9-12). The alpha and beta chains form an alternating ring which encloses part of the gamma chain. CF(1) is attached to CF(0) by a central stalk formed by the gamma and epsilon chains, while a peripheral stalk is formed by the delta and b chains.

The protein resides in the cell inner membrane. It carries out the reaction ATP + H2O + 4 H(+)(in) = ADP + phosphate + 5 H(+)(out). In terms of biological role, produces ATP from ADP in the presence of a proton gradient across the membrane. The alpha chain is a regulatory subunit. The chain is ATP synthase subunit alpha from Haemophilus influenzae (strain ATCC 51907 / DSM 11121 / KW20 / Rd).